Here is a 56-residue protein sequence, read N- to C-terminus: Large ribosomal subunit protein bL33 (56 aa).

The protein belongs to the bacterial ribosomal protein bL33 family.

This Histophilus somni (strain 129Pt) (Haemophilus somnus) protein is Large ribosomal subunit protein bL33.